The sequence spans 84 residues: Small ribosomal subunit protein bS18 (84 aa).

Belongs to the bacterial ribosomal protein bS18 family. In terms of assembly, part of the 30S ribosomal subunit. Forms a tight heterodimer with protein bS6.

Functionally, binds as a heterodimer with protein bS6 to the central domain of the 16S rRNA, where it helps stabilize the platform of the 30S subunit. The chain is Small ribosomal subunit protein bS18 from Ruthia magnifica subsp. Calyptogena magnifica.